Here is a 680-residue protein sequence, read N- to C-terminus: Forkhead box protein P4 (680 aa).

The segment covering 1–17 (MMVESASETIRSAPSGQ) has biased composition (polar residues). Residues 1 to 56 (MMVESASETIRSAPSGQNGVGSLSGQADGSSGGATGTTASGTGREVTTGADSNGEM) form a disordered region. Phosphoserine occurs at positions 52 and 86. Residues Lys175 and Lys246 each participate in a glycyl lysine isopeptide (Lys-Gly) (interchain with G-Cter in SUMO2) cross-link. A disordered region spans residues 262–306 (FAAPPKVSPPLSHHTLPNGQPTVLTSRRDSSSHEETPGSHPLYGH). Positions 276–286 (TLPNGQPTVLT) are enriched in polar residues. The segment covering 287–298 (SRRDSSSHEETP) has biased composition (basic and acidic residues). The C2H2-type zinc-finger motif lies at 307–332 (GECKWPGCETLCEDLGQFIKHLNTEH). The tract at residues 349–370 (VQQLEIQLAKESERLQAMMAHL) is leucine-zipper. Lys378 participates in a covalent cross-link: Glycyl lysine isopeptide (Lys-Gly) (interchain with G-Cter in SUMO2). The disordered stretch occupies residues 407-445 (GLVHPPTSAAAPVTPLRPPGLGSASLHGGGPARRRSSDK). Positions 467 to 559 (RPPFTYASLI…KMTGSPTLVK (93 aa)) form a DNA-binding region, fork-head. Position 554 is a phosphoserine (Ser554). Positions 602–680 (PLSHDDVGAP…EEELPGEELS (79 aa)) are disordered. The segment covering 617-635 (SNGSSSPPRLSPPQYSHQV) has biased composition (polar residues). Over residues 668 to 680 (RDLEEELPGEELS) the composition is skewed to acidic residues.

In terms of assembly, forms homodimers and heterodimers with FOXP1 and FOXP2. Dimerization is required for DNA-binding.

Its subcellular location is the nucleus. In terms of biological role, transcriptional repressor that represses lung-specific expression. In Homo sapiens (Human), this protein is Forkhead box protein P4 (FOXP4).